The primary structure comprises 114 residues: Large ribosomal subunit protein uL22 (114 aa).

It belongs to the universal ribosomal protein uL22 family. In terms of assembly, part of the 50S ribosomal subunit.

In terms of biological role, this protein binds specifically to 23S rRNA; its binding is stimulated by other ribosomal proteins, e.g. L4, L17, and L20. It is important during the early stages of 50S assembly. It makes multiple contacts with different domains of the 23S rRNA in the assembled 50S subunit and ribosome. Its function is as follows. The globular domain of the protein is located near the polypeptide exit tunnel on the outside of the subunit, while an extended beta-hairpin is found that lines the wall of the exit tunnel in the center of the 70S ribosome. In Mycoplasmopsis agalactiae (strain NCTC 10123 / CIP 59.7 / PG2) (Mycoplasma agalactiae), this protein is Large ribosomal subunit protein uL22.